The sequence spans 494 residues: Fumigaclavine B O-acetyltransferase easN (494 aa).

The protein belongs to the fumigaclavine B O-acetyltransferase family. Monomer.

The enzyme catalyses fumigaclavine B + acetyl-CoA = fumigaclavine A + CoA. Its pathway is alkaloid biosynthesis; ergot alkaloid biosynthesis. Its function is as follows. Fumigaclavine B O-acetyltransferase; part of the gene cluster that mediates the biosynthesis of fumiclavanine C, a fungal ergot alkaloid. DmaW catalyzes the first step of ergot alkaloid biosynthesis by condensing dimethylallyl diphosphate (DMAP) and tryptophan to form 4-dimethylallyl-L-tryptophan. The second step is catalyzed by the methyltransferase easF that methylates 4-dimethylallyl-L-tryptophan in the presence of S-adenosyl-L-methionine, resulting in the formation of 4-dimethylallyl-L-abrine. The catalase easC and the FAD-dependent oxidoreductase easE then transform 4-dimethylallyl-L-abrine to chanoclavine-I which is further oxidized by EasD in the presence of NAD(+), resulting in the formation of chanoclavine-I aldehyde. EasA reduces chanoclavine-I aldehyde to dihydrochanoclavine-I aldehyde that spontaneously dehydrates to form 6,8-dimethyl-6,7-didehydroergoline. EasG then catalyzes the reduction of 6,8-dimethyl-6,7-didehydroergoline to form festuclavine. Hydrolysis of festuclavine by easM then leads to the formation of fumigaclavine B which is in turn acetylated by easN to fumigaclavine A. Finally, easL catalyzes the conversion of fumigaclavine A into fumigaclavine C by attaching a dimethylallyl moiety to C-2 of the indole nucleus. The chain is Fumigaclavine B O-acetyltransferase easN from Aspergillus fumigatus (strain ATCC MYA-4609 / CBS 101355 / FGSC A1100 / Af293) (Neosartorya fumigata).